The sequence spans 519 residues: MQLNPAEISELIKSRIEGLAASSDIRNQGTVVSVTDGIVRVHGLSDVMQGEMLEFPAAADGQPSFGLALNLERDSVGAVILGEYEHISEGDTVKCTGRILEVPVGPELIGRVVNALGQPIDGKGPINAKMTDVIEKVAPGVIARQSVDQPLQTGLKSIDSMVPIGRGQRELIIGDRQTGKTAVAIDAIINQKGQGVTCIYVAIGQKASSIKNVVRALEQAGAMEYTIVVAASASESAAMQYVSAYSGCTMGEYFRDRGEDALIVYDDLSKQAVAYRQVSLLLRRPPGREAFPGDVFYLHSRLLERAARVNADYVEAFTKGEVKGKTGSLTALPVIETQAGDVSAFVPTNVISITDGQIFLETSLFNAGIRPAINAGISVSRVGGAAQTKLIKGLSGGIRTDLAQYRELAAFAQFASDLDEATRKQLDRGARVTELLKQPQYSPLSTALMGATLFTVNKGFLDDVDVKKVLAFEAGLHQYLKTSHGALLDRLQQNRAFDKEGKDEAELTQAITAFKKSFV.

174-181 (GDRQTGKT) lines the ATP pocket.

Belongs to the ATPase alpha/beta chains family. As to quaternary structure, F-type ATPases have 2 components, CF(1) - the catalytic core - and CF(0) - the membrane proton channel. CF(1) has five subunits: alpha(3), beta(3), gamma(1), delta(1), epsilon(1). CF(0) has three main subunits: a(1), b(2) and c(9-12). The alpha and beta chains form an alternating ring which encloses part of the gamma chain. CF(1) is attached to CF(0) by a central stalk formed by the gamma and epsilon chains, while a peripheral stalk is formed by the delta and b chains.

Its subcellular location is the cell inner membrane. The catalysed reaction is ATP + H2O + 4 H(+)(in) = ADP + phosphate + 5 H(+)(out). In terms of biological role, produces ATP from ADP in the presence of a proton gradient across the membrane. The alpha chain is a regulatory subunit. The chain is ATP synthase subunit alpha from Acidovorax ebreus (strain TPSY) (Diaphorobacter sp. (strain TPSY)).